The sequence spans 199 residues: N-(5'-phosphoribosyl)anthranilate isomerase (199 aa).

Belongs to the TrpF family.

It carries out the reaction N-(5-phospho-beta-D-ribosyl)anthranilate = 1-(2-carboxyphenylamino)-1-deoxy-D-ribulose 5-phosphate. It functions in the pathway amino-acid biosynthesis; L-tryptophan biosynthesis; L-tryptophan from chorismate: step 3/5. The chain is N-(5'-phosphoribosyl)anthranilate isomerase from Streptococcus pneumoniae (strain Hungary19A-6).